Here is a 544-residue protein sequence, read N- to C-terminus: Chaperonin GroEL 1 (544 aa).

ATP contacts are provided by residues 29 to 32 (TLGP), 86 to 90 (DGTTT), Gly-413, 476 to 478 (NAA), and Asp-492. Positions 523-544 (EPVKAPAGGGDMDGMGGMGGMM) are disordered. Gly residues predominate over residues 529 to 544 (AGGGDMDGMGGMGGMM).

Belongs to the chaperonin (HSP60) family. As to quaternary structure, forms a cylinder of 14 subunits composed of two heptameric rings stacked back-to-back. Interacts with the co-chaperonin GroES.

Its subcellular location is the cytoplasm. The catalysed reaction is ATP + H2O + a folded polypeptide = ADP + phosphate + an unfolded polypeptide.. Functionally, together with its co-chaperonin GroES, plays an essential role in assisting protein folding. The GroEL-GroES system forms a nano-cage that allows encapsulation of the non-native substrate proteins and provides a physical environment optimized to promote and accelerate protein folding. The polypeptide is Chaperonin GroEL 1 (Cutibacterium acnes (strain DSM 16379 / KPA171202) (Propionibacterium acnes)).